We begin with the raw amino-acid sequence, 197 residues long: 22.7 kDa class IV heat shock protein (197 aa).

A signal peptide spans 1–28 (MSLKPLNMLLVPFLLLILAADFPLKAKA). The 117-residue stretch at 68-184 (PSITLSHARV…GPRMVSIVEE (117 aa)) folds into the sHSP domain. Residues 194–197 (DELK) carry the Prevents secretion from ER motif.

It belongs to the small heat shock protein (HSP20) family. In terms of assembly, forms oligomeric structures.

Its subcellular location is the endoplasmic reticulum lumen. The chain is 22.7 kDa class IV heat shock protein (HSP22.7) from Pisum sativum (Garden pea).